The chain runs to 1894 residues: MEQRRFYLRAMQADNLSVVLLSVAWLLLARGTTGMPQYSTFHSENRDWTFNHLTVHRRTGAVYVGAINRVYKLTGNLTIQVAHKTGPEEDNKACYPPLIVQPCSEVLTLTNNVNKLLIIDYSENRLLACGSLYQGVCKLLRLDDLFILVEPSHKKEHYLSSVNKTGTMYGVIVRSEGEDGKLFIGTAVDGKQDYFPTLSSRKLPRDPESSAMLDYELHSDFVSSLIKIPSDTLALVSHFDIFYIYGFASGGFVYFLTVQPETPDGMAINSAGDLFYTSRIVRLCKDDPKFHSYVSLPFGCTRAGVEYRLLQAAYLAKPGEALAQAFNISSDEDVLFAIFSKGQKQYHHPPDDSALCAFPIRAINLQIKERLQSCYHGEGNLELNWLLGKDVQCTKAPVPIDDNFCGLDINQPLGGSTPVEGLTLYTTSRDRLTSVASYVYNGYSVVFVGTKSGKLKKIRADGPPHGGVQYEMVSVFKDGSPILRDMAFSINQLYLYVMSERQVTRVPVESCEQYTTCGECLSSGDPHCGWCALHNMCSRRDKCQRAWEANRFAASISQCMSLEVHPNSISVSDHSRLLSLVVNDAPNLSEGIACAFGNLTEVEGQVSGSQVICISPGPKDVPVIPLDQDWFGLELQLRSKETGKIFVSTEFKFYNCSAHQLCLSCVNSAFRCHWCKYRNLCTHDPTTCSFQEGRINVSEDCPQLVPTEEILIPVGEVKPITLKARNLPQPQSGQRGYECVLSIQGAVHRVPALRFNSSSVQCQNSSYQYDGMDISNLAVDFAVVWNGNFIIDNPQDLKVHLYKCAAQRESCGLCLKADHKFECGWCSGERRCTLHQHCPSTSSPWLDWSSHNVKCSNPQITEILTVSGPPEGGTRVTIHGVNLGLDFSEIAHHVQVAGVPCTPIPGEYIIAEQIVCEMGHAVIGTTSGPVRLCIGECKPEFMTKSHQQYTFVNPSVLSLSPIRGPESGGTMVTITGHYLGAGSSVAVYLGNQTCEFYGRSMNEIVCVSPPSSNGLGPVPVSVSVDRARVDSSLQFEYIDDPRVQRIEPEWSITSGHTPLTITGFNLDVIQEPRVRVKFNGKESVNVCTVVNTTTLTCLAPSLTSDYRPGLDTVERPDEFGFLFNNVQSLLIYNDTKFIYYPNPTFELLSPTGILDQKPGSPIILKGKNLCPPASGGAKLNYTVMIGETPCTVTVSETQLLCEPPNLTGQHKVMVHVGGMVFSPGSVSVISDSLLTLPAIISIAAGGSLLLIIVIIVLIAYKRKSRENDLTLKRLQMQMDNLESRVALECKEAFAELQTDINELTSDLDRSGIPYLDYRTYAMRVLFPGIEDHPVLRELEVQGNGQQHVEKALKLFAQLINNKVFLLTFIRTLELQRSFSMRDRGNVASLIMTGLQGRLEYATDVLKQLLSDLIDKNLENKNHPKLLLRRTESVAEKMLTNWFAFLLHKFLKECAGEPLFMLYCAIKQQMEKGPIDAITGEARYSLSEDKLIRQQIEYKTLILNCVNPDNENSPEIPVKVLNCDTITQVKEKILDAVYKNVPYSQRPRAVDMDLEWRQGRIARVVLQDEDITTKIEGDWKRLNTLMHYQVSDRSVVALVPKQTSSYNIPASASISRTSISRYDSSFRYTGSPDSLRSRVPMITPDLESGVKVWHLVKNHDHGDQKEGDRGSKMVSEIYLTRLLATKGTLQKFVDDLFETLFSTVHRGSALPLAIKYMFDFLDEQADRHSIHDTDVRHTWKSNCLPLRFWVNVIKNPQFVFDIHKGSITDACLSVVAQTFMDSCSTSEHRLGKDSPSNKLLYAKDIPSYKNWVERYYADIAKLPAISDQDMNAYLAEQSRLHATEFNMLSALNEIYSYVSKYSEELIGALEQDEQARRQRLAYKVEHLINAMSIES.

Residues 1–34 (MEQRRFYLRAMQADNLSVVLLSVAWLLLARGTTG) form the signal peptide. N-linked (GlcNAc...) asparagine glycosylation is found at N15 and N76. Positions 35 to 508 (MPQYSTFHSE…SERQVTRVPV (474 aa)) constitute a Sema domain. Residues 35-1237 (MPQYSTFHSE…VISDSLLTLP (1203 aa)) are Extracellular-facing. 2 cysteine pairs are disulfide-bonded: C94/C103 and C129/C137. N-linked (GlcNAc...) asparagine glycosylation is found at N163 and N327. 8 disulfide bridges follow: C284-C405, C300-C356, C374-C393, C511-C528, C517-C559, C520-C537, C531-C543, and C594-C613. Residues N598, N696, and N756 are each glycosylated (N-linked (GlcNAc...) asparagine). IPT/TIG domains follow at residues 858-951 (PQIT…QYTF), 954-1037 (PSVL…QFEY), 1041-1139 (PRVQ…KFIY), and 1143-1228 (PTFE…SVSV). N1180 and N1205 each carry an N-linked (GlcNAc...) asparagine glycan. A helical transmembrane segment spans residues 1238 to 1258 (AIISIAAGGSLLLIIVIIVLI). Residues 1259-1894 (AYKRKSREND…HLINAMSIES (636 aa)) lie on the Cytoplasmic side of the membrane. Residues 1261–1310 (KRKSRENDLTLKRLQMQMDNLESRVALECKEAFAELQTDINELTSDLDRS) are a coiled coil. S1612 bears the Phosphoserine mark.

It belongs to the plexin family. Homodimer. Interacts with RND1. Interacts directly with NRP1 and NRP2. The PLXNA2 homodimer interacts with a SEMA6A homodimer, giving rise to a heterotetramer.

The protein resides in the cell membrane. In terms of biological role, coreceptor for SEMA3A and SEMA6A. Necessary for signaling by SEMA6A and class 3 semaphorins and subsequent remodeling of the cytoskeleton. Plays a role in axon guidance, invasive growth and cell migration. Class 3 semaphorins bind to a complex composed of a neuropilin and a plexin. The plexin modulates the affinity of the complex for specific semaphorins, and its cytoplasmic domain is required for the activation of down-stream signaling events in the cytoplasm. This Mus musculus (Mouse) protein is Plexin-A2 (Plxna2).